Consider the following 56-residue polypeptide: Small ribosomal subunit protein uS14 (56 aa).

Zn(2+)-binding residues include cysteine 21, cysteine 24, cysteine 39, and cysteine 42.

The protein belongs to the universal ribosomal protein uS14 family. The cofactor is Zn(2+).

The polypeptide is Small ribosomal subunit protein uS14 (RPS29) (Candida glabrata (strain ATCC 2001 / BCRC 20586 / JCM 3761 / NBRC 0622 / NRRL Y-65 / CBS 138) (Yeast)).